The sequence spans 103 residues: Small ribosomal subunit protein uS10 (103 aa).

Belongs to the universal ribosomal protein uS10 family. As to quaternary structure, part of the 30S ribosomal subunit.

In terms of biological role, involved in the binding of tRNA to the ribosomes. This is Small ribosomal subunit protein uS10 from Xylella fastidiosa (strain 9a5c).